The following is a 390-amino-acid chain: Galactokinase (390 aa).

33 to 36 is a substrate binding site; that stretch reads EHTD. ATP contacts are provided by residues Ser-67 and 124-130; that span reads GAGLSSS. Positions 130 and 162 each coordinate Mg(2+). Catalysis depends on Asp-174, which acts as the Proton acceptor. Position 224 (Tyr-224) interacts with substrate.

Belongs to the GHMP kinase family. GalK subfamily.

The protein resides in the cytoplasm. The catalysed reaction is alpha-D-galactose + ATP = alpha-D-galactose 1-phosphate + ADP + H(+). Its pathway is carbohydrate metabolism; galactose metabolism. Its function is as follows. Catalyzes the transfer of the gamma-phosphate of ATP to D-galactose to form alpha-D-galactose-1-phosphate (Gal-1-P). This Bacillus subtilis (strain 168) protein is Galactokinase.